Here is a 177-residue protein sequence, read N- to C-terminus: MAELTTIARPYAKAAFDFAVEKQAVDSWAEMLGFAALVSENETMRPLLAGSMASSALAKLFIDVCGEQLNEHGQNLIKVMAENGRLEVLPAVAQLFAEYRLEWAKEVEADVVSATELSDAQQQQIGVSLEKRLARKVKLNCSVDAGLIAGVIIKAGDLVIDGSVSGKLARLSDKLQS.

It belongs to the ATPase delta chain family. F-type ATPases have 2 components, F(1) - the catalytic core - and F(0) - the membrane proton channel. F(1) has five subunits: alpha(3), beta(3), gamma(1), delta(1), epsilon(1). F(0) has three main subunits: a(1), b(2) and c(10-14). The alpha and beta chains form an alternating ring which encloses part of the gamma chain. F(1) is attached to F(0) by a central stalk formed by the gamma and epsilon chains, while a peripheral stalk is formed by the delta and b chains.

The protein localises to the cell inner membrane. Its function is as follows. F(1)F(0) ATP synthase produces ATP from ADP in the presence of a proton or sodium gradient. F-type ATPases consist of two structural domains, F(1) containing the extramembraneous catalytic core and F(0) containing the membrane proton channel, linked together by a central stalk and a peripheral stalk. During catalysis, ATP synthesis in the catalytic domain of F(1) is coupled via a rotary mechanism of the central stalk subunits to proton translocation. This protein is part of the stalk that links CF(0) to CF(1). It either transmits conformational changes from CF(0) to CF(1) or is implicated in proton conduction. This chain is ATP synthase subunit delta, found in Shewanella amazonensis (strain ATCC BAA-1098 / SB2B).